The chain runs to 412 residues: Major facilitator superfamily domain-containing protein 3 (412 aa).

A run of 12 helical transmembrane segments spans residues 10 to 30, 40 to 60, 68 to 88, 99 to 119, 152 to 172, 173 to 193, 204 to 224, 252 to 272, 291 to 311, 320 to 340, 361 to 381, and 384 to 404; these read GLYL…PILL, VGLT…APLV, VWLT…AVLP, TTVM…DVAL, GGLL…LLAA, TYWL…LPWP, YLLQ…FVLT, LWSG…GGAL, LGSL…GASV, AVLL…TATF, FLAT…GVLA, and LGPH…VLDL.

The protein belongs to the major facilitator superfamily. In terms of tissue distribution, in brain, expressed in the cortex, striatum, hippocampus, hypothalamus, thalamus and cerebellum (at protein level). Widely expressed with highest levels in kidney and liver.

The protein localises to the membrane. This chain is Major facilitator superfamily domain-containing protein 3 (Mfsd3), found in Mus musculus (Mouse).